The sequence spans 148 residues: Multiprotein-bridging factor 1 (148 aa).

Residues 1-97 are disordered; it reads MSDWDTVTKI…AKGWAQKDLS (97 aa). The HTH cro/C1-type domain maps to 82-136; sequence IQKGRQAKGWAQKDLSQRINEKPQVVNDYESGRAIPNQQVLSKMERALGIKLRGQ. The segment at residues 93-112 is a DNA-binding region (H-T-H motif); sequence QKDLSQRINEKPQVVNDYES.

It belongs to the MBF1 family.

In terms of biological role, transcriptional coactivator that stimulates GCN4-dependent transcriptional activity by bridging the DNA-binding region of GCN4 and TBP (SPT15), thereby recruiting TBP to GCN4-bound promoters. Involved in induction of the ribosome quality control (RQC) pathway; a pathway that degrades nascent peptide chains during problematic translation. Required to prevent stalled ribosomes from frameshifting. This Schizosaccharomyces pombe (strain 972 / ATCC 24843) (Fission yeast) protein is Multiprotein-bridging factor 1 (mbf1).